A 232-amino-acid polypeptide reads, in one-letter code: 7-cyano-7-deazaguanine synthase (232 aa).

7 to 17 (CSGGLDSVSLA) contributes to the ATP binding site. 4 residues coordinate Zn(2+): Cys-185, Cys-193, Cys-196, and Cys-199.

Belongs to the QueC family. The cofactor is Zn(2+).

It catalyses the reaction 7-carboxy-7-deazaguanine + NH4(+) + ATP = 7-cyano-7-deazaguanine + ADP + phosphate + H2O + H(+). It functions in the pathway purine metabolism; 7-cyano-7-deazaguanine biosynthesis. In terms of biological role, catalyzes the ATP-dependent conversion of 7-carboxy-7-deazaguanine (CDG) to 7-cyano-7-deazaguanine (preQ(0)). In Brucella anthropi (strain ATCC 49188 / DSM 6882 / CCUG 24695 / JCM 21032 / LMG 3331 / NBRC 15819 / NCTC 12168 / Alc 37) (Ochrobactrum anthropi), this protein is 7-cyano-7-deazaguanine synthase.